The sequence spans 173 residues: MEEQQRARSHTVTTTTSSFAENFSTTSSSFAYDREFLRTPPGLLIVAEIVLGLLVWTLIAGTEYFRVPAFGWVMFVAVFYWVLTVFFLIVYITLTYTRIPQVPWTTVGLCFNGSAFVLYFSAAIVDASSVSPEKEGHNFNSWAASSFFAFLVTICYAGNTYFSFIAWRSRTAQ.

The 133-residue stretch at 36-168 (FLRTPPGLLI…NTYFSFIAWR (133 aa)) folds into the MARVEL domain. A run of 4 helical transmembrane segments spans residues 41 to 61 (PGLL…LIAG), 70 to 90 (FGWV…FLIV), 105 to 125 (TTVG…AAIV), and 147 to 167 (FFAF…FIAW).

This sequence belongs to the chemokine-like factor family.

The protein localises to the membrane. The protein is CKLF-like MARVEL transmembrane domain-containing protein 8 (Cmtm8) of Mus musculus (Mouse).